A 129-amino-acid chain; its full sequence is Large ribosomal subunit protein bL20 (129 aa).

Belongs to the bacterial ribosomal protein bL20 family.

In terms of biological role, binds directly to 23S ribosomal RNA and is necessary for the in vitro assembly process of the 50S ribosomal subunit. It is not involved in the protein synthesizing functions of that subunit. This Mycobacterium marinum (strain ATCC BAA-535 / M) protein is Large ribosomal subunit protein bL20.